Reading from the N-terminus, the 499-residue chain is Proline--tRNA ligase (499 aa).

Belongs to the class-II aminoacyl-tRNA synthetase family. ProS type 3 subfamily. Homodimer.

The protein resides in the cytoplasm. It carries out the reaction tRNA(Pro) + L-proline + ATP = L-prolyl-tRNA(Pro) + AMP + diphosphate. Functionally, catalyzes the attachment of proline to tRNA(Pro) in a two-step reaction: proline is first activated by ATP to form Pro-AMP and then transferred to the acceptor end of tRNA(Pro). The sequence is that of Proline--tRNA ligase from Bdellovibrio bacteriovorus (strain ATCC 15356 / DSM 50701 / NCIMB 9529 / HD100).